Reading from the N-terminus, the 303-residue chain is MKQKTTTFKSGFVSIIGRPNVGKSTLLNRVIGQKIAIMSDKPQTTRNKVQGVLTRDDAQLVFMDTPGIHKPKHRLGDFMMKVAKNTLREVDLILYVVEADAKFGPGEQYIIERLQETKTPVFLLINKIDKVSPEELLKVIDLYKDRYPFAEIIPISALEGNNVPTLVEQIVEHMEEGPQYYPADQVTDHPERFIIAELIREKVLHLTKEEIPHSVAVVIEQIKKRDNGKVYVGATVIVERSSQKGIIIGKHGAMLKEVGQLARSDIEALLGSSVYLELWVKVQKDWRNRPSQLKDYGFNENEY.

One can recognise an Era-type G domain in the interval 9-176 (KSGFVSIIGR…VEQIVEHMEE (168 aa)). The tract at residues 17–24 (GRPNVGKS) is G1. 17-24 (GRPNVGKS) serves as a coordination point for GTP. The interval 43-47 (QTTRN) is G2. The tract at residues 64–67 (DTPG) is G3. GTP is bound by residues 64–68 (DTPGI) and 126–129 (NKID). The interval 126–129 (NKID) is G4. The segment at 155–157 (ISA) is G5. One can recognise a KH type-2 domain in the interval 199 to 284 (IREKVLHLTK…YLELWVKVQK (86 aa)).

The protein belongs to the TRAFAC class TrmE-Era-EngA-EngB-Septin-like GTPase superfamily. Era GTPase family. Monomer.

The protein localises to the cytoplasm. It is found in the cell membrane. Functionally, an essential GTPase that binds both GDP and GTP, with rapid nucleotide exchange. Plays a role in 16S rRNA processing and 30S ribosomal subunit biogenesis and possibly also in cell cycle regulation and energy metabolism. In Shouchella clausii (strain KSM-K16) (Alkalihalobacillus clausii), this protein is GTPase Era.